The following is a 160-amino-acid chain: MGQKFHKLNSKYGIIDYPILLKDLESIIQEFPKSERKFYEYAIKALKKEVGKKEKILHMTSADPKLTKFGFMVITEKKLLFVTMKGGFFGGADTEVVEFKSIKEVDFDIAPNPLGMATMQLGILHLKIKGKLGMSSKRTIRNIDEHSLDKIVAILREQTK.

The chain is SPbeta prophage-derived uncharacterized protein YokE (yokE) from Bacillus subtilis (strain 168).